A 176-amino-acid chain; its full sequence is Inorganic pyrophosphatase (176 aa).

Positions 30, 44, and 56 each coordinate substrate. Positions 66, 71, and 103 each coordinate Mg(2+). Tyr-142 is a binding site for substrate.

Belongs to the PPase family. As to quaternary structure, homohexamer. Requires Mg(2+) as cofactor.

It is found in the cytoplasm. The enzyme catalyses diphosphate + H2O = 2 phosphate + H(+). In terms of biological role, catalyzes the hydrolysis of inorganic pyrophosphate (PPi) forming two phosphate ions. The chain is Inorganic pyrophosphatase from Vibrio vulnificus (strain CMCP6).